A 2958-amino-acid chain; its full sequence is Protein CSF1 (2958 aa).

Topologically, residues 1–17 (MEAISQLRGVPLTHQKD) are cytoplasmic. A helical; Signal-anchor for type II membrane protein membrane pass occupies residues 18–38 (FSWVFLVDWILTVVVCLTMIF). Over 39–2958 (YMGRIYAYLV…QYVKILDDTH (2920 aa)) the chain is Extracellular. Residues Asn-82, Asn-117, Asn-144, Asn-271, Asn-478, Asn-530, Asn-816, Asn-821, Asn-839, and Asn-892 are each glycosylated (N-linked (GlcNAc...) asparagine). The tract at residues 813–834 (GYQNSSLKNESEDKGPMKRSDL) is disordered. The segment covering 821-834 (NESEDKGPMKRSDL) has biased composition (basic and acidic residues). The interval 1175–1196 (MEPSRASFSEDDNDEEADPSSF) is disordered. Residues 1183–1192 (SEDDNDEEAD) are compositionally biased toward acidic residues. N-linked (GlcNAc...) asparagine glycans are attached at residues Asn-1309, Asn-1368, Asn-1453, Asn-1785, Asn-1921, Asn-2130, Asn-2146, Asn-2280, Asn-2337, Asn-2520, Asn-2578, Asn-2719, and Asn-2869.

It belongs to the CSF1 family. As to quaternary structure, interacts with MCD4; CSF1 channels phosphatidylethanolamine to MCD4 in the endoplasmic reticulum at contact sites to support GPI anchor biosynthesis.

It is found in the cell membrane. The protein localises to the endoplasmic reticulum membrane. The protein resides in the mitochondrion membrane. Tube-forming lipid transport protein which provides phosphatidylethanolamine for glycosylphosphatidylinositol (GPI) anchor synthesis in the endoplasmic reticulum. Required for the glucose and other nutrients uptake at low temperature. The sequence is that of Protein CSF1 from Saccharomyces cerevisiae (strain ATCC 204508 / S288c) (Baker's yeast).